Consider the following 899-residue polypeptide: Periodic tryptophan protein 2 homolog (899 aa).

WD repeat units lie at residues 9-52 (NLLG…TLPF), 53-92 (SHRKNIARIGLTPQGNLLLSIDEDGQAILTNVPRRVVLYH), 94-132 (SFKAPVTALSFSPSGRHFIVGLGRKIEVWHVPSTPDANA), 149-188 (QHFDDVRHIEWSHDSRFFLTSSKDLTARIWSVDQEEGFTP), 193-232 (GHRQGVVGAWFSKDQETIYTVSKDGAVFDWQYVAKPGQDE), 252-291 (QNSATVRCAAFHPESNLLVAGFSNGIFGLYEMPDFNMIHT), 294-334 (ISQN…YILK), 337-376 (GHFDSMNSLVYSPDGQRIVTVADDGKIKVWDTESGFCIVT), 379-418 (EHTSGITACEFSKKGNVLFTSSLDGSIRAWDLIRYRNFRT), 422-464 (PERL…DRLS), 465-504 (GHEGPVSSLAFAPNGGLLVSGSWDRTARIWSIFNRTQTSE), 507-546 (QLNSDVLDIAFRPDSLQIAISTLDGNLSFWSVSEAEQQAG), and 569-608 (AGTKAFNTIRYSTDGSCLLAGGNSKYICLYSVTTMVLLKK). The interval 639–668 (DEQGEASDFEDRIDRSLPGSKRGDPSARRK) is disordered. Residues 647-668 (FEDRIDRSLPGSKRGDPSARRK) show a composition bias toward basic and acidic residues. The WD 14 repeat unit spans residues 669–709 (NPEVRVNGVAFSPNGSAFCAASTEGLLIYSLDTTIQFDPFD). The interval 866-899 (TGSDEQPGAGGMSLNDVMQQDEGNASEDEWIGLV) is disordered. A compositionally biased stretch (acidic residues) spans 889–899 (NASEDEWIGLV).

Belongs to the WD repeat PWP2 family.

This Neurospora crassa (strain ATCC 24698 / 74-OR23-1A / CBS 708.71 / DSM 1257 / FGSC 987) protein is Periodic tryptophan protein 2 homolog.